We begin with the raw amino-acid sequence, 290 residues long: Arylamine N-acetyltransferase 2 (290 aa).

Catalysis depends on Cys-68, which acts as the Acyl-thioester intermediate. CoA-binding residues include Ser-103 and Gly-104. 106 to 107 (IH) lines the substrate pocket. Catalysis depends on residues His-107 and Asp-122. Position 208 (Tyr-208) interacts with CoA.

It belongs to the arylamine N-acetyltransferase family.

The protein resides in the cytoplasm. It catalyses the reaction an arylamine + acetyl-CoA = an N-acetylarylamine + CoA. It carries out the reaction an N-hydroxyarylamine + acetyl-CoA = an N-acetoxyarylamine + CoA. Catalyzes the N- or O-acetylation of various arylamine and heterocyclic amine substrates, and participates in the detoxification of a plethora of hydrazine and arylamine drugs. This is Arylamine N-acetyltransferase 2 (NAT2) from Mesocricetus auratus (Golden hamster).